Consider the following 91-residue polypeptide: Long neurotoxin OH-57 (91 aa).

Positions 1-21 (MKTLLLTLVVVTIVCLDLGYT) are cleaved as a signal peptide. 5 disulfide bridges follow: Cys-24-Cys-41, Cys-34-Cys-62, Cys-47-Cys-51, Cys-66-Cys-77, and Cys-78-Cys-83.

It belongs to the three-finger toxin family. Long-chain subfamily. Type II alpha-neurotoxin sub-subfamily. As to expression, expressed by the venom gland.

It localises to the secreted. Functionally, binds with high affinity to muscular (alpha-1/CHRNA1) and neuronal (alpha-7/CHRNA7) nicotinic acetylcholine receptor (nAChR) and inhibits acetylcholine from binding to the receptor, thereby impairing neuromuscular and neuronal transmission. In Ophiophagus hannah (King cobra), this protein is Long neurotoxin OH-57.